The primary structure comprises 448 residues: C4-dicarboxylate transport protein (448 aa).

The next 9 membrane-spanning stretches (helical) occupy residues 9-29 (SLYF…HFYP), 59-79 (LIKM…IAGM), 91-111 (VALL…LLVI), 159-179 (AFAN…GFAL), 203-223 (IVNM…AFTI), 237-257 (LIIC…GTIS), 312-332 (GYSF…IFIA), 345-365 (ITLL…TGSG), and 367-387 (IVMA…LALI).

Belongs to the dicarboxylate/amino acid:cation symporter (DAACS) (TC 2.A.23) family.

The protein resides in the cell inner membrane. Responsible for the transport of dicarboxylates such as succinate, fumarate, and malate from the periplasm across the membrane. This is C4-dicarboxylate transport protein from Acinetobacter baylyi (strain ATCC 33305 / BD413 / ADP1).